The chain runs to 369 residues: Cobalt-precorrin-5B C(1)-methyltransferase (369 aa).

The protein belongs to the CbiD family.

It catalyses the reaction Co-precorrin-5B + S-adenosyl-L-methionine = Co-precorrin-6A + S-adenosyl-L-homocysteine. Its pathway is cofactor biosynthesis; adenosylcobalamin biosynthesis; cob(II)yrinate a,c-diamide from sirohydrochlorin (anaerobic route): step 6/10. Catalyzes the methylation of C-1 in cobalt-precorrin-5B to form cobalt-precorrin-6A. The protein is Cobalt-precorrin-5B C(1)-methyltransferase of Leptospira borgpetersenii serovar Hardjo-bovis (strain JB197).